Here is a 447-residue protein sequence, read N- to C-terminus: Chordin-like protein 1 (447 aa).

Residues 1-22 (MDGMKYIISLFFIFVFLEGSKT) form the signal peptide. VWFC domains follow at residues 30–95 (TYCV…PRCP) and 108–174 (KSCE…RVCR). Residue N113 is glycosylated (N-linked (GlcNAc...) asparagine). The Cell attachment site signature appears at 174–176 (RGD). The segment at 200–224 (SYLRSPYDPPPNRQAGGLPRFPGSR) is disordered. A VWFC 3 domain is found at 253–318 (QVCVSNGKTY…IDGKCCKVCP (66 aa)). N286 carries N-linked (GlcNAc...) asparagine glycosylation.

Post-translationally, may be glycosylated. As to expression, expressed in heart, brain, lung, liver, kidney and testis.

Its subcellular location is the secreted. Seems to antagonize the function of BMP4 by binding to it and preventing its interaction with receptors. Alters the fate commitment of neural stem cells from gliogenesis to neurogenesis. Contributes to neuronal differentiation of neural stem cells in the brain by preventing the adoption of a glial fate. May play a crucial role in dorsoventral axis formation. Antagonizes the function of BMP7 and may thus play an important role in the embryonic bone formation. Shows no inhibitory effect on the inducing activity of BMP2. Plays a role during anterior segment eye development. This Mus musculus (Mouse) protein is Chordin-like protein 1 (Chrdl1).